Consider the following 345-residue polypeptide: MLKIAVDAMGGDFAPEVNILGAYEVVQDIEVEIILVGDEKKIKSFLPEKKETKGIISVIPADDVIQMDENISSALRRKNTSMRKAVELVKAGKADAVISAGHSGAMMALSFLLLGKLPNVERPAIATVMPCLKGHFILLDAGANVDCKPEHLVQFAFMGEAYHKALFNSQSPKIALLSIGEEGSKGNELTKEAFKLLKSSRLNFVGNIEGKDIFFGQADVVVCDGFVGNIVLKVGEGLAEALMKMLKREIADIITGKLGYMMIKPAIKSFRKKVDYSEYGGALLLGINGTSIICHGRSSAKAIKNAIKVATEMVKKQIYTRISESLNQTEERDESQNSVNRLLCS.

This sequence belongs to the PlsX family. Homodimer. Probably interacts with PlsY.

The protein localises to the cytoplasm. The enzyme catalyses a fatty acyl-[ACP] + phosphate = an acyl phosphate + holo-[ACP]. The protein operates within lipid metabolism; phospholipid metabolism. Functionally, catalyzes the reversible formation of acyl-phosphate (acyl-PO(4)) from acyl-[acyl-carrier-protein] (acyl-ACP). This enzyme utilizes acyl-ACP as fatty acyl donor, but not acyl-CoA. This chain is Phosphate acyltransferase, found in Thermodesulfovibrio yellowstonii (strain ATCC 51303 / DSM 11347 / YP87).